Reading from the N-terminus, the 341-residue chain is NADH-quinone oxidoreductase subunit H 1 (341 aa).

Transmembrane regions (helical) follow at residues 13–33, 82–102, 115–135, 161–181, 190–210, 248–268, 277–297, and 313–333; these read LVVI…IAYI, GLFL…WAVI, VGVL…IMAG, IGFV…TAIV, MLGW…VSAL, YVAI…GWLP, WVPG…LFAM, and LGWK…ASVL.

The protein belongs to the complex I subunit 1 family. NDH-1 is composed of 14 different subunits. Subunits NuoA, H, J, K, L, M, N constitute the membrane sector of the complex.

Its subcellular location is the cell inner membrane. It catalyses the reaction a quinone + NADH + 5 H(+)(in) = a quinol + NAD(+) + 4 H(+)(out). In terms of biological role, NDH-1 shuttles electrons from NADH, via FMN and iron-sulfur (Fe-S) centers, to quinones in the respiratory chain. The immediate electron acceptor for the enzyme in this species is believed to be ubiquinone. Couples the redox reaction to proton translocation (for every two electrons transferred, four hydrogen ions are translocated across the cytoplasmic membrane), and thus conserves the redox energy in a proton gradient. This subunit may bind ubiquinone. The sequence is that of NADH-quinone oxidoreductase subunit H 1 from Rhodopseudomonas palustris (strain ATCC BAA-98 / CGA009).